A 507-amino-acid polypeptide reads, in one-letter code: Anthranilate synthase component 1 (507 aa).

Position 65 (serine 65) interacts with L-tryptophan. At serine 81 the chain carries Phosphoserine. Position 223 is a phosphothreonine (threonine 223). 280-282 (PYL) is a binding site for L-tryptophan. 316–317 (GT) provides a ligand contact to chorismate. Glutamate 343 provides a ligand contact to Mg(2+). Residues tyrosine 431, arginine 452, 466 to 468 (GGG), and glycine 468 each bind chorismate. Glutamate 481 contacts Mg(2+).

The protein belongs to the anthranilate synthase component I family. As to quaternary structure, tetramer of two components I and two components II. The cofactor is Mg(2+).

It catalyses the reaction chorismate + L-glutamine = anthranilate + pyruvate + L-glutamate + H(+). Its pathway is amino-acid biosynthesis; L-tryptophan biosynthesis; L-tryptophan from chorismate: step 1/5. In Saccharomyces cerevisiae (strain ATCC 204508 / S288c) (Baker's yeast), this protein is Anthranilate synthase component 1 (TRP2).